We begin with the raw amino-acid sequence, 89 residues long: Small ribosomal subunit protein uS14 (89 aa).

This sequence belongs to the universal ribosomal protein uS14 family. In terms of assembly, part of the 30S ribosomal subunit. Contacts proteins S3 and S10.

Binds 16S rRNA, required for the assembly of 30S particles and may also be responsible for determining the conformation of the 16S rRNA at the A site. This is Small ribosomal subunit protein uS14 from Flavobacterium johnsoniae (strain ATCC 17061 / DSM 2064 / JCM 8514 / BCRC 14874 / CCUG 350202 / NBRC 14942 / NCIMB 11054 / UW101) (Cytophaga johnsonae).